The sequence spans 714 residues: Cyclomaltodextrin glucanotransferase (714 aa).

Residues 1 to 27 form the signal peptide; sequence MKSRYKRLTSLALSLSMALGISLPAWA. Residues 28-165 form an A1 region; that stretch reads SPDTSVDNKV…NIKVVIDFAP (138 aa). Residues Asp54, Asn59, Asn60, Gly78, and Asp80 each coordinate Ca(2+). 127 to 128 provides a ligand contact to substrate; it reads YW. Asn166 provides a ligand contact to Ca(2+). Residues 166–229 are b; sequence NHTSPADRDN…NLYDLADINH (64 aa). A substrate-binding site is contributed by His167. Ile217 serves as a coordination point for Ca(2+). Residue 220 to 223 participates in substrate binding; it reads NLYD. A Ca(2+)-binding site is contributed by Asp226. Positions 230–434 are A2; sequence NNNAMDAYFK…LRKSNPAIAY (205 aa). Arg254 is a substrate binding site. The active-site Nucleophile is Asp256. Position 259–260 (259–260) interacts with substrate; it reads KH. His260 is a binding site for Ca(2+). The active-site Proton donor is the Glu285. 3 residues coordinate substrate: His355, Asp399, and Arg403. A c region spans residues 435–523; it reads GTTTERWVNN…GTAVWQYTAP (89 aa). Residues 524–610 are d; that stretch reads ETSPAIGNVG…SNTFKSFNVL (87 aa). Positions 527 to 607 constitute an IPT/TIG domain; that stretch reads PAIGNVGPTM…GTASNTFKSF (81 aa). Residues 609 to 714 form the CBM20 domain; it reads VLTGDQVTVR…VGTVTVDWQN (106 aa). The segment at 611–714 is e; sequence TGDQVTVRFL…VGTVTVDWQN (104 aa).

The protein belongs to the glycosyl hydrolase 13 family. In terms of assembly, monomer. Requires Ca(2+) as cofactor.

The protein localises to the secreted. The enzyme catalyses Cyclizes part of a (1-&gt;4)-alpha-D-glucan chain by formation of a (1-&gt;4)-alpha-D-glucosidic bond.. This Paenibacillus macerans (Bacillus macerans) protein is Cyclomaltodextrin glucanotransferase (cgtM).